A 111-amino-acid polypeptide reads, in one-letter code: MIQVLLVIICLAVFPYQGSCIILESGNVNDYEIVYPKKLIVLPTGAMNSPHPCCDPVTCKPKKGEHCISGPCCRNCKFMNSGTICKRARGDDMNDYCTGITPDCPRNPYKD.

Positions M1–C20 are cleaved as a signal peptide. A propeptide spanning residues I21–M47 is cleaved from the precursor. Positions M47 to D111 constitute a Disintegrin domain. 4 disulfides stabilise this stretch: C53–C76, C67–C73, C72–C97, and C85–C104. The Cell attachment site motif lies at R89–D91.

As to quaternary structure, heterodimer; disulfide-linked.

The protein localises to the secreted. Inhibits ADP-induced platelet aggregation in human platelet-rich plasma (IC(50) is 8 uM). The polypeptide is Disintegrin DS-AN (Atheris nitschei (Great lakes bush viper)).